The primary structure comprises 142 residues: Hemoglobin subunit beta-1 (142 aa).

The Globin domain maps to 2-142 (SLTDEEIRLI…VTEALSCQYH (141 aa)). His-59 and His-88 together coordinate heme b.

This sequence belongs to the globin family. In terms of assembly, heterotetramer of two alpha chains and two beta chains. In terms of tissue distribution, red blood cells.

In terms of biological role, involved in oxygen transport from the lung to the various peripheral tissues. In Torpedo marmorata (Marbled electric ray), this protein is Hemoglobin subunit beta-1 (HBB1).